A 196-amino-acid polypeptide reads, in one-letter code: MDVVILDTGCANLSSVTYAVQRLGYTPVISRDPAVVLRADKLFMPGVGTAHAAMEQLRQRELIELIKSCTQPVLGICLGMQLLATSSEESGGITTLGMIDAPVKKMTDFGLPLPHMGWNQITAQAGNHLFRGIPDGTYFYFVHGYAMPICPNTIAQTNYGEPFTAAVEKDNFFGVQFHPERSGAAGAQLMKNFLEM.

Residues aspartate 2–methionine 196 enclose the Glutamine amidotransferase type-1 domain. Cysteine 77 (nucleophile) is an active-site residue. Active-site residues include histidine 178 and glutamate 180.

In terms of assembly, heterodimer of HisH and HisF.

The protein localises to the cytoplasm. The enzyme catalyses 5-[(5-phospho-1-deoxy-D-ribulos-1-ylimino)methylamino]-1-(5-phospho-beta-D-ribosyl)imidazole-4-carboxamide + L-glutamine = D-erythro-1-(imidazol-4-yl)glycerol 3-phosphate + 5-amino-1-(5-phospho-beta-D-ribosyl)imidazole-4-carboxamide + L-glutamate + H(+). It catalyses the reaction L-glutamine + H2O = L-glutamate + NH4(+). Its pathway is amino-acid biosynthesis; L-histidine biosynthesis; L-histidine from 5-phospho-alpha-D-ribose 1-diphosphate: step 5/9. IGPS catalyzes the conversion of PRFAR and glutamine to IGP, AICAR and glutamate. The HisH subunit catalyzes the hydrolysis of glutamine to glutamate and ammonia as part of the synthesis of IGP and AICAR. The resulting ammonia molecule is channeled to the active site of HisF. The sequence is that of Imidazole glycerol phosphate synthase subunit HisH from Yersinia pestis.